Reading from the N-terminus, the 508-residue chain is Maturase K (508 aa).

The protein belongs to the intron maturase 2 family. MatK subfamily.

It localises to the plastid. The protein localises to the chloroplast. Its function is as follows. Usually encoded in the trnK tRNA gene intron. Probably assists in splicing its own and other chloroplast group II introns. In Collinsia heterophylla (Purple Chinese houses), this protein is Maturase K.